Reading from the N-terminus, the 196-residue chain is Protein Flattop (196 aa).

Residues 107 to 196 (NGLRPEIFGK…PHAGRNLAEV (90 aa)) form a disordered region. The span at 113 to 124 (IFGKPHDPDSQK) shows a compositional bias: basic and acidic residues. Residues 137–149 (APSPTIIPSSPAS) show a composition bias toward low complexity. A compositionally biased stretch (polar residues) spans 150–162 (NLSSPDQLQSSHP).

Belongs to the Flattop family. Microtubule inner protein component of sperm flagellar doublet microtubules. Interacts with DLG3. In terms of tissue distribution, expressed in trachea multiciliated cells.

The protein resides in the cytoplasm. The protein localises to the cytoskeleton. Its subcellular location is the cilium basal body. It is found in the cell projection. It localises to the cilium. The protein resides in the apical cell membrane. The protein localises to the cilium axoneme. Its subcellular location is the flagellum axoneme. Its function is as follows. Microtubule inner protein (MIP) part of the dynein-decorated doublet microtubules (DMTs) in cilia axoneme. Acts as a regulator of cilium basal body docking and positioning in mono- and multiciliated cells. Regulates basal body docking and cilia formation in multiciliated lung cells. Regulates kinocilium positioning and stereocilia bundle morphogenesis in the inner ear. In Bos taurus (Bovine), this protein is Protein Flattop.